Reading from the N-terminus, the 101-residue chain is Small ribosomal subunit protein uS14 (101 aa).

The segment covering Met-1 to Asn-10 has biased composition (basic and acidic residues). Residues Met-1–Glu-25 are disordered.

It belongs to the universal ribosomal protein uS14 family. In terms of assembly, part of the 30S ribosomal subunit. Contacts proteins S3 and S10.

Binds 16S rRNA, required for the assembly of 30S particles and may also be responsible for determining the conformation of the 16S rRNA at the A site. The chain is Small ribosomal subunit protein uS14 from Rhodopseudomonas palustris (strain BisA53).